The sequence spans 283 residues: Thymidylate synthase (283 aa).

Residue R22 coordinates dUMP. The active-site Nucleophile is C160. Residues 180 to 183 (RSCD), N191, and 221 to 223 (HIY) each bind dUMP. Residue D183 participates in (6R)-5,10-methylene-5,6,7,8-tetrahydrofolate binding. S282 lines the (6R)-5,10-methylene-5,6,7,8-tetrahydrofolate pocket.

This sequence belongs to the thymidylate synthase family. Bacterial-type ThyA subfamily. In terms of assembly, homodimer.

The protein resides in the cytoplasm. It catalyses the reaction dUMP + (6R)-5,10-methylene-5,6,7,8-tetrahydrofolate = 7,8-dihydrofolate + dTMP. Its pathway is pyrimidine metabolism; dTTP biosynthesis. Its function is as follows. Catalyzes the reductive methylation of 2'-deoxyuridine-5'-monophosphate (dUMP) to 2'-deoxythymidine-5'-monophosphate (dTMP) while utilizing 5,10-methylenetetrahydrofolate (mTHF) as the methyl donor and reductant in the reaction, yielding dihydrofolate (DHF) as a by-product. This enzymatic reaction provides an intracellular de novo source of dTMP, an essential precursor for DNA biosynthesis. The polypeptide is Thymidylate synthase (Shewanella sediminis (strain HAW-EB3)).